A 437-amino-acid polypeptide reads, in one-letter code: Serine hydroxymethyltransferase (437 aa).

(6S)-5,6,7,8-tetrahydrofolate is bound by residues Leu130 and 134 to 136 (GHL). Position 239 is an N6-(pyridoxal phosphate)lysine (Lys239). 363-365 (TPF) lines the (6S)-5,6,7,8-tetrahydrofolate pocket.

The protein belongs to the SHMT family. As to quaternary structure, homodimer. Pyridoxal 5'-phosphate is required as a cofactor.

Its subcellular location is the cytoplasm. The enzyme catalyses (6R)-5,10-methylene-5,6,7,8-tetrahydrofolate + glycine + H2O = (6S)-5,6,7,8-tetrahydrofolate + L-serine. Its pathway is one-carbon metabolism; tetrahydrofolate interconversion. It participates in amino-acid biosynthesis; glycine biosynthesis; glycine from L-serine: step 1/1. Functionally, catalyzes the reversible interconversion of serine and glycine with tetrahydrofolate (THF) serving as the one-carbon carrier. This reaction serves as the major source of one-carbon groups required for the biosynthesis of purines, thymidylate, methionine, and other important biomolecules. Also exhibits THF-independent aldolase activity toward beta-hydroxyamino acids, producing glycine and aldehydes, via a retro-aldol mechanism. The protein is Serine hydroxymethyltransferase of Bartonella henselae (strain ATCC 49882 / DSM 28221 / CCUG 30454 / Houston 1) (Rochalimaea henselae).